The sequence spans 77 residues: MQVLVRDNNVDQALRALKKKMQREGIFREMKMRGYYEKPSEKRAREKAEAVRRTRKLARKRAQREGLISNGRGSPLK.

Basic and acidic residues predominate over residues 38–52 (KPSEKRAREKAEAVR). Positions 38 to 77 (KPSEKRAREKAEAVRRTRKLARKRAQREGLISNGRGSPLK) are disordered. Residues 53–62 (RTRKLARKRA) are compositionally biased toward basic residues.

This sequence belongs to the bacterial ribosomal protein bS21 family.

The sequence is that of Small ribosomal subunit protein bS21 from Bartonella henselae (strain ATCC 49882 / DSM 28221 / CCUG 30454 / Houston 1) (Rochalimaea henselae).